Reading from the N-terminus, the 597-residue chain is Adenine deaminase 2 (597 aa).

This sequence belongs to the metallo-dependent hydrolases superfamily. Adenine deaminase family. It depends on Mn(2+) as a cofactor.

It catalyses the reaction adenine + H2O + H(+) = hypoxanthine + NH4(+). The chain is Adenine deaminase 2 from Agrobacterium fabrum (strain C58 / ATCC 33970) (Agrobacterium tumefaciens (strain C58)).